The following is a 384-amino-acid chain: MAKHLFTSESVSEGHPDKIADQISDAVLDAILEQDPKARVACETYVKTGMVLVGGEITTSAWVDIEEITRNTVREIGYVHSDMGFDANSCAVLSAIGKQSPDINQGVDRADPLEQGAGDQGLMFGYATNETDVLMPAPVTYAHRLVQRQAEVRKNGTLPWLRPDAKSQVTFQYDDGKIVGIDAVVLSTQHAEDIDQKSLQEAVMEEIIKPTLPTEWLNASTKFFINPTGRFVIGGPMGDCGLTGRKIIVDTYGGMARHGGGAFSGKDPSKVDRSAAYAARYVAKNIVAAGLADRCEIQVSYAIGVAEPTSIMVETFGTEKVPSEQLTLLVREFFDLRPYGLIQMLDLLHPIYKETAAYGHFGREHFPWEKTDKAALLREAAGLK.

His15 serves as a coordination point for ATP. Asp17 lines the Mg(2+) pocket. Glu43 lines the K(+) pocket. 2 residues coordinate L-methionine: Glu56 and Gln99. The tract at residues 99-109 (QSPDINQGVDR) is flexible loop. ATP is bound by residues 164-166 (DAK), 230-231 (RF), Asp239, 245-246 (RK), Ala262, and Lys266. Residue Asp239 coordinates L-methionine. Residue Lys270 coordinates L-methionine.

It belongs to the AdoMet synthase family. In terms of assembly, homotetramer; dimer of dimers. Mg(2+) serves as cofactor. The cofactor is K(+).

It localises to the cytoplasm. It catalyses the reaction L-methionine + ATP + H2O = S-adenosyl-L-methionine + phosphate + diphosphate. It functions in the pathway amino-acid biosynthesis; S-adenosyl-L-methionine biosynthesis; S-adenosyl-L-methionine from L-methionine: step 1/1. Its function is as follows. Catalyzes the formation of S-adenosylmethionine (AdoMet) from methionine and ATP. The overall synthetic reaction is composed of two sequential steps, AdoMet formation and the subsequent tripolyphosphate hydrolysis which occurs prior to release of AdoMet from the enzyme. The chain is S-adenosylmethionine synthase from Klebsiella pneumoniae (strain 342).